We begin with the raw amino-acid sequence, 231 residues long: NADH-ubiquinone oxidoreductase chain 4 (231 aa).

The next 6 helical transmembrane spans lie at 1 to 21 (PIAG…YGII), 34 to 54 (VFLP…LTCL), 61 to 80 (SLIA…AIMI), 84 to 106 (WGLS…LFCL), 118 to 138 (ILIL…WWLL), and 169 to 189 (TIIL…HMFL).

This sequence belongs to the complex I subunit 4 family.

It localises to the mitochondrion membrane. The catalysed reaction is a ubiquinone + NADH + 5 H(+)(in) = a ubiquinol + NAD(+) + 4 H(+)(out). In terms of biological role, core subunit of the mitochondrial membrane respiratory chain NADH dehydrogenase (Complex I) that is believed to belong to the minimal assembly required for catalysis. Complex I functions in the transfer of electrons from NADH to the respiratory chain. The immediate electron acceptor for the enzyme is believed to be ubiquinone. This chain is NADH-ubiquinone oxidoreductase chain 4 (MT-ND4), found in Porthidium nasutum (Hognosed pitviper).